Consider the following 192-residue polypeptide: Thymidine kinase (192 aa).

ATP contacts are provided by residues 9–16 (GAMNSGKS) and 85–88 (DEVQ). Glu-86 serves as the catalytic Proton acceptor. Zn(2+) is bound by residues Cys-143, Cys-146, Cys-181, and Cys-184.

It belongs to the thymidine kinase family. In terms of assembly, homotetramer.

The protein resides in the cytoplasm. The enzyme catalyses thymidine + ATP = dTMP + ADP + H(+). This is Thymidine kinase from Shouchella clausii (strain KSM-K16) (Alkalihalobacillus clausii).